A 1185-amino-acid polypeptide reads, in one-letter code: Syntaxin-binding protein 5-like (1185 aa).

Methionine 1 carries the N-acetylmethionine modification. The interval 15–44 (ASSPGSGSSSGSNSGGAGSGSVHPGGTAGL) is disordered. Residues 16–26 (SSPGSGSSSGS) are compositionally biased toward low complexity. 10 WD repeats span residues 73–106 (TALA…CYCQ), 113–152 (VLQL…SLKF), 157–193 (ITYC…GYVI), 212–246 (HLSD…ELRV), 252–284 (IHSI…PSRP), 306–348 (PILK…KAIT), 356–390 (IVEF…VVDL), 412–489 (TCTA…YKLK), 517–628 (QMIY…DLVI), and 642–704 (TSLS…IADN). Threonine 567 is subject to Phosphothreonine. A disordered region spans residues 567–601 (TPEPETSPPFPDLSSQLPPSRSLSGSTNTVSSEGV). Phosphoserine occurs at positions 573, 588, and 592. The span at 578 to 592 (DLSSQLPPSRSLSGS) shows a compositional bias: low complexity. At threonine 595 the chain carries Phosphothreonine. Serine 598 is modified (phosphoserine). Position 708 is an omega-N-methylarginine (arginine 708). The span at 747–768 (TSDHVNGHCTSPTSQSCSSGKR) shows a compositional bias: polar residues. Residues 747 to 770 (TSDHVNGHCTSPTSQSCSSGKRLS) are disordered. 11 positions are modified to phosphoserine: serine 762, serine 764, serine 765, serine 770, serine 771, serine 792, serine 799, serine 811, serine 819, serine 821, and serine 822. 4 WD repeats span residues 831–888 (ITAL…SGTF), 897–968 (TFSC…QTCL), 973–1017 (ITET…LDVN), and 1031–1054 (CFTN…TYSQ). Threonine 1092 is subject to Phosphothreonine. A v-SNARE coiled-coil homology domain is found at 1120-1180 (SIEGMKGAAG…HELMLKYKDK (61 aa)).

It belongs to the WD repeat L(2)GL family. In terms of assembly, interacts with STX1A and STX4. Post-translationally, phosphorylated, leading to STXBP5L increased turnover and subsequent de-repression of insulin secretion. Phosphorylated on serine residues in response to glucose or phorbol esters. Ubiquitinated by the E3 ligase SYVN1, leading to STXBP5L proteasomal degradation. As to expression, detected in hippocampus and cerebellum. Expressed in pancreatic beta-cells where it modulates insulin secretion.

It is found in the cytoplasm. The protein resides in the cell membrane. Its subcellular location is the membrane. Its function is as follows. Plays a role in vesicle trafficking and exocytosis inhibition. In pancreatic beta-cells, inhibits insulin secretion probably by interacting with and regulating STX1A and STX4, key t-SNARE proteins involved in the fusion of insulin granules to the plasma membrane. Also plays a role in neurotransmitter release by inhibiting basal acetylcholine release from axon terminals and by preventing synaptic fatigue upon repetitive stimulation. Promotes as well axonal outgrowth. This Mus musculus (Mouse) protein is Syntaxin-binding protein 5-like (Stxbp5l).